Consider the following 594-residue polypeptide: Amino-acid permease 1 (594 aa).

12 consecutive transmembrane segments (helical) span residues 75 to 95 (QMIAIGSCIGTGLFVSTGKSL), 101 to 121 (GSLMINFIILSAMILALILSL), 146 to 166 (IGFAQSWLYFWIWLTVLPSEI), 181 to 201 (LNPAIWVTIFLAYVVLVNAFG), 210 to 230 (FVSSFLKVVIVIIFFFVAIII), 297 to 317 (VFYRMGFFYIITIFLITLVVP), 323 to 343 (LGNVSPFIIAIKNGGIHVLPH), 344 to 364 (ITNAVILVSVLSVGNAAVFAA), 390 to 410 (PVISYLCSLAMACIAYVNAAP), 416 to 436 (FDWLMSVSGGGAFVIWGLSFI), 468 to 488 (YGVLINFLALCALVYISIFPV), and 498 to 518 (FFVSFLGPSVFIAYLLISPIF). The segment at 550-587 (TSELSEKDLTKPNLQSNDNKNSEDLESNTPPQKKSALQ) is disordered.

It belongs to the amino acid-polyamine-organocation (APC) superfamily.

It localises to the membrane. In Schizosaccharomyces pombe (strain 972 / ATCC 24843) (Fission yeast), this protein is Amino-acid permease 1 (aap1).